Here is a 2314-residue protein sequence, read N- to C-terminus: Protein Ycf2 (2314 aa).

1653 to 1660 provides a ligand contact to ATP; it reads GSIGTGRS.

The protein belongs to the Ycf2 family.

The protein localises to the plastid. Its subcellular location is the chloroplast stroma. Its function is as follows. Probable ATPase of unknown function. Its presence in a non-photosynthetic plant (Epifagus virginiana) and experiments in tobacco indicate that it has an essential function which is probably not related to photosynthesis. The polypeptide is Protein Ycf2 (Piper cenocladum (Ant piper)).